The sequence spans 108 residues: Iron-sulfur cluster assembly protein CyaY (108 aa).

The protein belongs to the frataxin family.

Its function is as follows. Involved in iron-sulfur (Fe-S) cluster assembly. May act as a regulator of Fe-S biogenesis. The sequence is that of Iron-sulfur cluster assembly protein CyaY from Burkholderia mallei (strain NCTC 10247).